A 338-amino-acid chain; its full sequence is Glycerol-3-phosphate dehydrogenase [NAD(P)+] (338 aa).

4 residues coordinate NADPH: S14, F15, R35, and K109. K109 and G137 together coordinate sn-glycerol 3-phosphate. A141 contacts NADPH. Residues K192, D247, S257, R258, and N259 each coordinate sn-glycerol 3-phosphate. Catalysis depends on K192, which acts as the Proton acceptor. R258 contributes to the NADPH binding site. NADPH is bound by residues L282 and E284.

This sequence belongs to the NAD-dependent glycerol-3-phosphate dehydrogenase family.

It is found in the cytoplasm. The enzyme catalyses sn-glycerol 3-phosphate + NAD(+) = dihydroxyacetone phosphate + NADH + H(+). It carries out the reaction sn-glycerol 3-phosphate + NADP(+) = dihydroxyacetone phosphate + NADPH + H(+). It functions in the pathway membrane lipid metabolism; glycerophospholipid metabolism. Functionally, catalyzes the reduction of the glycolytic intermediate dihydroxyacetone phosphate (DHAP) to sn-glycerol 3-phosphate (G3P), the key precursor for phospholipid synthesis. The sequence is that of Glycerol-3-phosphate dehydrogenase [NAD(P)+] from Rickettsia rickettsii (strain Iowa).